The chain runs to 550 residues: Hydroxylamine reductase (550 aa).

Residues cysteine 3, cysteine 6, cysteine 18, and cysteine 25 each coordinate [2Fe-2S] cluster. Residues histidine 249, glutamate 273, cysteine 317, cysteine 405, cysteine 433, cysteine 458, glutamate 492, and lysine 494 each coordinate hybrid [4Fe-2O-2S] cluster. Cysteine 405 carries the cysteine persulfide modification.

The protein belongs to the HCP family. [2Fe-2S] cluster is required as a cofactor. Hybrid [4Fe-2O-2S] cluster serves as cofactor.

The protein localises to the cytoplasm. The catalysed reaction is A + NH4(+) + H2O = hydroxylamine + AH2 + H(+). Functionally, catalyzes the reduction of hydroxylamine to form NH(3) and H(2)O. The protein is Hydroxylamine reductase of Yersinia pseudotuberculosis serotype IB (strain PB1/+).